The chain runs to 72 residues: MAQMFTDPPKAAKIYINSSVESTFIDTSSLNSEKYATIWRSLSIFIRMLILNFCKLFKVKWLQNSVVLQFLT.

This is an uncharacterized protein from Vaccinia virus (strain Copenhagen) (VACV).